The chain runs to 139 residues: Ribonuclease P/MRP protein subunit POP5 (139 aa).

It belongs to the eukaryotic/archaeal RNase P protein component 2 family.

It is found in the nucleus. The catalysed reaction is Endonucleolytic cleavage of RNA, removing 5'-extranucleotides from tRNA precursor.. In terms of biological role, component of ribonuclease P, a protein complex that generates mature tRNA molecules by cleaving their 5'-ends. Also a component of RNase MRP, which cleaves pre-rRNA sequences. The sequence is that of Ribonuclease P/MRP protein subunit POP5 from Schizosaccharomyces pombe (strain 972 / ATCC 24843) (Fission yeast).